Consider the following 954-residue polypeptide: Glucosidase 2 subunit alpha (954 aa).

A signal peptide spans 1–22 (MVLLKWLVCQLVFFTAFSHAFT). 5 N-linked (GlcNAc...) asparagine glycosylation sites follow: Asn114, Asn126, Asn142, Asn173, and Asn345. Catalysis depends on Asp537, which acts as the Nucleophile. The active site involves Glu540. Asp614 serves as the catalytic Proton donor. Asn783, Asn791, Asn867, Asn880, Asn907, and Asn941 each carry an N-linked (GlcNAc...) asparagine glycan.

Belongs to the glycosyl hydrolase 31 family. Heterodimer of a catalytic subunit alpha (ROT2) and a subunit beta (GTB1).

It is found in the endoplasmic reticulum. It catalyses the reaction N(4)-(alpha-D-Glc-(1-&gt;3)-alpha-D-Man-(1-&gt;2)-alpha-D-Man-(1-&gt;2)-alpha-D-Man-(1-&gt;3)-[alpha-D-Man-(1-&gt;2)-alpha-D-Man-(1-&gt;3)-[alpha-D-Man-(1-&gt;2)-alpha-D-Man-(1-&gt;6)]-alpha-D-Man-(1-&gt;6)]-beta-D-Man-(1-&gt;4)-beta-D-GlcNAc-(1-&gt;4)-beta-D-GlcNAc)-L-asparaginyl-[protein] + H2O = N(4)-(alpha-D-Man-(1-&gt;2)-alpha-D-Man-(1-&gt;2)-alpha-D-Man-(1-&gt;3)-[alpha-D-Man-(1-&gt;2)-alpha-D-Man-(1-&gt;3)-[alpha-D-Man-(1-&gt;2)-alpha-D-Man-(1-&gt;6)]-alpha-D-Man-(1-&gt;6)]-beta-D-Man-(1-&gt;4)-beta-D-GlcNAc-(1-&gt;4)-beta-D-GlcNAc)-L-asparaginyl-[protein] (N-glucan mannose isomer 9A1,2,3B1,2,3) + beta-D-glucose. The enzyme catalyses N(4)-(alpha-D-Glc-(1-&gt;3)-alpha-D-Glc-(1-&gt;3)-alpha-D-Man-(1-&gt;2)-alpha-D-Man-(1-&gt;2)-alpha-D-Man-(1-&gt;3)-[alpha-D-Man-(1-&gt;2)-alpha-D-Man-(1-&gt;3)-[alpha-D-Man-(1-&gt;2)-alpha-D-Man-(1-&gt;6)]-alpha-D-Man-(1-&gt;6)]-beta-D-Man-(1-&gt;4)-beta-D-GlcNAc-(1-&gt;4)-beta-D-GlcNAc)-L-asparaginyl-[protein] + H2O = N(4)-(alpha-D-Glc-(1-&gt;3)-alpha-D-Man-(1-&gt;2)-alpha-D-Man-(1-&gt;2)-alpha-D-Man-(1-&gt;3)-[alpha-D-Man-(1-&gt;2)-alpha-D-Man-(1-&gt;3)-[alpha-D-Man-(1-&gt;2)-alpha-D-Man-(1-&gt;6)]-alpha-D-Man-(1-&gt;6)]-beta-D-Man-(1-&gt;4)-beta-D-GlcNAc-(1-&gt;4)-beta-D-GlcNAc)-L-asparaginyl-[protein] + beta-D-glucose. The protein operates within glycan metabolism; N-glycan metabolism. With respect to regulation, inhibited by glucose, maltose and nigerose, and by the antibiotic deoxynojirimycin. Catalytic subunit of glucosidase 2, which cleaves sequentially the 2 innermost alpha-1,3-linked glucose residues from the Glc(2)Man(9)GlcNAc(2) oligosaccharide precursor of immature glycoproteins. In Saccharomyces cerevisiae (strain ATCC 204508 / S288c) (Baker's yeast), this protein is Glucosidase 2 subunit alpha (ROT2).